The primary structure comprises 1420 residues: Mediator of RNA polymerase II transcription subunit 13 (1420 aa).

3 positions are modified to phosphoserine: Ser370, Ser375, and Ser425. Positions 416–427 (TTVSNDLENSPL) are enriched in polar residues. The segment at 416–511 (TTVSNDLENS…TNESNKSISD (96 aa)) is disordered. Positions 429–439 (TELEANGRSLE) are enriched in basic and acidic residues. Polar residues predominate over residues 440–453 (KVNNSVSKTGSVDT). Residues 454–484 (LHNKEGTLEQREQNENLPSDKSDSMVDKELF) show a composition bias toward basic and acidic residues. The segment covering 494–508 (GDSNKSNSTNESNKS) has biased composition (low complexity). Phosphothreonine is present on Thr601. Ser608 carries the phosphoserine; by PKA modification. Residue Ser636 is modified to Phosphoserine. Positions 653–691 (LSSSEEEEDEEENGSSDEDLKSLNVRDDMKPSDNISTNT) are disordered. Residues 655-669 (SSEEEEDEEENGSSD) show a composition bias toward acidic residues. Basic and acidic residues predominate over residues 670–683 (EDLKSLNVRDDMKP). The residue at position 748 (Ser748) is a Phosphoserine.

It belongs to the Mediator complex subunit 13 family. In terms of assembly, component of the SRB8-11 complex which consists of SRB8, SSN2/SRB9, SSN3/SRB10 and SSN8/SRB11. The SRB8-11 complex associates with the Mediator complex. The SSN3/SRB10 and SSN8/SRB11 kinase-cyclin pair also associate with the RNA polymerase II holoenzyme. Phosphorylated. PKA-dependent phosphorylation at 'Ser-608' is enhanced by activation of the RAS signaling pathway.

It is found in the nucleus. Component of the SRB8-11 complex. The SRB8-11 complex is a regulatory module of the Mediator complex which is itself involved in regulation of basal and activated RNA polymerase II-dependent transcription. The SRB8-11 complex may be involved in the transcriptional repression of a subset of genes regulated by Mediator. It may inhibit the association of the Mediator complex with RNA polymerase II to form the holoenzyme complex. The SRB8-11 complex phosphorylates the C-terminal domain (CTD) of the largest subunit of RNA polymerase II RPB1 at serines 2 and 5. This is Mediator of RNA polymerase II transcription subunit 13 (SSN2) from Saccharomyces cerevisiae (strain ATCC 204508 / S288c) (Baker's yeast).